Here is a 212-residue protein sequence, read N- to C-terminus: Protein-L-isoaspartate O-methyltransferase (212 aa).

The active site involves S60.

Belongs to the methyltransferase superfamily. L-isoaspartyl/D-aspartyl protein methyltransferase family.

Its subcellular location is the cytoplasm. It carries out the reaction [protein]-L-isoaspartate + S-adenosyl-L-methionine = [protein]-L-isoaspartate alpha-methyl ester + S-adenosyl-L-homocysteine. In terms of biological role, catalyzes the methyl esterification of L-isoaspartyl residues in peptides and proteins that result from spontaneous decomposition of normal L-aspartyl and L-asparaginyl residues. It plays a role in the repair and/or degradation of damaged proteins. This chain is Protein-L-isoaspartate O-methyltransferase, found in Pseudomonas entomophila (strain L48).